The following is an 85-amino-acid chain: NADH-ubiquinone oxidoreductase chain 4L (85 aa).

2 consecutive transmembrane segments (helical) span residues 21-41 (LLVT…LLVY) and 51-71 (FIFL…LVSL).

This sequence belongs to the complex I subunit 4L family.

Its subcellular location is the mitochondrion membrane. It carries out the reaction a ubiquinone + NADH + 5 H(+)(in) = a ubiquinol + NAD(+) + 4 H(+)(out). Its function is as follows. Core subunit of the mitochondrial membrane respiratory chain NADH dehydrogenase (Complex I) that is believed to belong to the minimal assembly required for catalysis. Complex I functions in the transfer of electrons from NADH to the respiratory chain. The immediate electron acceptor for the enzyme is believed to be ubiquinone. The polypeptide is NADH-ubiquinone oxidoreductase chain 4L (ND4L) (Artemia franciscana (Brine shrimp)).